The primary structure comprises 245 residues: Geranylgeranylglyceryl phosphate synthase (245 aa).

The Mg(2+) site is built by D24 and S54. Residues 172-178, 203-204, and 225-226 contribute to the sn-glycerol 1-phosphate site; these read YLEAGSG, GG, and GT.

The protein belongs to the GGGP/HepGP synthase family. Group II subfamily. Mg(2+) is required as a cofactor.

Its subcellular location is the cytoplasm. It catalyses the reaction sn-glycerol 1-phosphate + (2E,6E,10E)-geranylgeranyl diphosphate = sn-3-O-(geranylgeranyl)glycerol 1-phosphate + diphosphate. It functions in the pathway membrane lipid metabolism; glycerophospholipid metabolism. Functionally, prenyltransferase that catalyzes the transfer of the geranylgeranyl moiety of geranylgeranyl diphosphate (GGPP) to the C3 hydroxyl of sn-glycerol-1-phosphate (G1P). This reaction is the first ether-bond-formation step in the biosynthesis of archaeal membrane lipids. This chain is Geranylgeranylglyceryl phosphate synthase, found in Staphylothermus marinus (strain ATCC 43588 / DSM 3639 / JCM 9404 / F1).